The following is a 125-amino-acid chain: Small ribosomal subunit protein eS8 (125 aa).

A disordered region spans residues 1 to 20 (MIWQGRSRRKPSGGFYRKAR).

This sequence belongs to the eukaryotic ribosomal protein eS8 family. As to quaternary structure, part of the 30S ribosomal subunit.

This is Small ribosomal subunit protein eS8 (rps8e) from Archaeoglobus fulgidus (strain ATCC 49558 / DSM 4304 / JCM 9628 / NBRC 100126 / VC-16).